The chain runs to 417 residues: Tyrosine aminotransferase (417 aa).

K249 carries the N6-(pyridoxal phosphate)lysine modification.

Belongs to the class-I pyridoxal-phosphate-dependent aminotransferase family. In terms of assembly, homodimer. Pyridoxal 5'-phosphate is required as a cofactor.

The catalysed reaction is L-tyrosine + 2-oxoglutarate = 3-(4-hydroxyphenyl)pyruvate + L-glutamate. It participates in amino-acid degradation; L-phenylalanine degradation; acetoacetate and fumarate from L-phenylalanine: step 2/6. Transaminase involved in tyrosine breakdown. Converts tyrosine to p-hydroxyphenylpyruvate. Has much lower affinity and transaminase activity towards phenylalanine. This Dictyostelium discoideum (Social amoeba) protein is Tyrosine aminotransferase (tat).